A 207-amino-acid chain; its full sequence is Cytochrome c biogenesis ATP-binding export protein CcmA (207 aa).

One can recognise an ABC transporter domain in the interval Leu4–Ala207. Gly36 to Thr43 serves as a coordination point for ATP.

It belongs to the ABC transporter superfamily. CcmA exporter (TC 3.A.1.107) family. The complex is composed of two ATP-binding proteins (CcmA) and two transmembrane proteins (CcmB).

The protein resides in the cell inner membrane. The enzyme catalyses heme b(in) + ATP + H2O = heme b(out) + ADP + phosphate + H(+). Functionally, part of the ABC transporter complex CcmAB involved in the biogenesis of c-type cytochromes; once thought to export heme, this seems not to be the case, but its exact role is uncertain. Responsible for energy coupling to the transport system. This is Cytochrome c biogenesis ATP-binding export protein CcmA from Shigella sonnei (strain Ss046).